Reading from the N-terminus, the 323-residue chain is tRNA (guanine(9)-N1)-methyltransferase (323 aa).

Residues 1–16 (MTEQTSEATVVNNSPA) are compositionally biased toward polar residues. 2 disordered regions span residues 1–34 (MTEQ…EIEE) and 192–215 (TGAP…NSTD). The span at 25–34 (EKPTPEEIEE) shows a compositional bias: basic and acidic residues. The 221-residue stretch at 99–319 (KAQPIPSRQI…KVLPPRKIKS (221 aa)) folds into the SAM-dependent MTase TRM10-type domain. Low complexity predominate over residues 204–215 (GNSNSNTTNSTD). S-adenosyl-L-methionine is bound by residues 225 to 226 (LT), Gly245, 249 to 253 (DKNRH), Cys257, Leu271, and 283 to 285 (HVL). The Proton acceptor role is filled by Asp249.

This sequence belongs to the class IV-like SAM-binding methyltransferase superfamily. TRM10 family. Monomer.

It localises to the cytoplasm. It is found in the nucleus. It carries out the reaction guanosine(9) in tRNA + S-adenosyl-L-methionine = N(1)-methylguanosine(9) in tRNA + S-adenosyl-L-homocysteine + H(+). Its function is as follows. S-adenosyl-L-methionine-dependent guanine N(1)-methyltransferase that catalyzes the formation of N(1)-methylguanine at position 9 (m1G9) in cytoplasmic tRNA. In Candida albicans (strain SC5314 / ATCC MYA-2876) (Yeast), this protein is tRNA (guanine(9)-N1)-methyltransferase.